The following is a 314-amino-acid chain: MGDVNQSVASDFILVGLFSHSGSRQLLFSLVAVMFVIGLLGNTVLLFLIRVDSRLHTPMYFLLSQLSLFDIGCPMVTIPKMASDFLRGEGATSYGGGAAQIFFLTLMGVAEGVLLVLMSYDRYVAVCQPLQYPVLMRRQVCLLMMGSSWVVGVLNASIQTSITLHFPYCASRIVDHFFCEVPALLKLSCADTCAYEMALSTSGVLILMLPLSLIATSYGHVLQAVLSMRSEEARHKAVTTCSSHITVVGLFYGAAVFMYMVPCAYHSPQQDNVVSLFYSLVTPTLNPLIYSLRNPEVWMALVKVLSRAGLRQMC.

At Met1 to Gln25 the chain is on the extracellular side. An N-linked (GlcNAc...) asparagine glycan is attached at Asn5. Residues Leu26–Ile49 form a helical membrane-spanning segment. Residues Arg50–Thr57 are Cytoplasmic-facing. The chain crosses the membrane as a helical span at residues Pro58–Pro79. Residues Lys80 to Gln100 are Extracellular-facing. The helical transmembrane segment at Ile101–Tyr120 threads the bilayer. Over Asp121–Gln139 the chain is Cytoplasmic. A helical transmembrane segment spans residues Val140–Ile158. The Extracellular portion of the chain corresponds to Gln159–Tyr195. The chain crosses the membrane as a helical span at residues Glu196–Gly219. Residues His220–Lys236 lie on the Cytoplasmic side of the membrane. Residues Ala237–Tyr259 traverse the membrane as a helical segment. Topologically, residues Met260–Asn272 are extracellular. A helical transmembrane segment spans residues Val273 to Leu292. Residues Arg293 to Cys314 lie on the Cytoplasmic side of the membrane.

The protein belongs to the G-protein coupled receptor 1 family.

The protein localises to the cell membrane. In terms of biological role, odorant receptor. This is Olfactory receptor 2Z1 (OR2Z1) from Homo sapiens (Human).